The chain runs to 235 residues: Deoxyribose-phosphate aldolase (235 aa).

D107 functions as the Proton donor/acceptor in the catalytic mechanism. K167 functions as the Schiff-base intermediate with acetaldehyde in the catalytic mechanism. The Proton donor/acceptor role is filled by K197.

It belongs to the DeoC/FbaB aldolase family. DeoC type 1 subfamily. Homotetramer.

It localises to the cytoplasm. It catalyses the reaction 2-deoxy-D-ribose 5-phosphate = D-glyceraldehyde 3-phosphate + acetaldehyde. It functions in the pathway carbohydrate degradation; 2-deoxy-D-ribose 1-phosphate degradation; D-glyceraldehyde 3-phosphate and acetaldehyde from 2-deoxy-alpha-D-ribose 1-phosphate: step 2/2. Its function is as follows. Catalyzes a reversible aldol reaction between acetaldehyde and D-glyceraldehyde 3-phosphate to generate 2-deoxy-D-ribose 5-phosphate. The polypeptide is Deoxyribose-phosphate aldolase (Aeropyrum pernix (strain ATCC 700893 / DSM 11879 / JCM 9820 / NBRC 100138 / K1)).